The primary structure comprises 84 residues: Putative movement protein (84 aa).

Residues 15–35 traverse the membrane as a helical segment; sequence ALHGILVAFIAVLCLIGCLWA.

Interacts with the capsid protein (CP). Part of a MP-CP-viral DNA complex.

The protein resides in the host membrane. Its function is as follows. Involved in the viral transport within, and between cells. This Miscanthus streak virus (isolate 91) (MiSV) protein is Putative movement protein.